Consider the following 251-residue polypeptide: Cobalt transport protein CbiM (251 aa).

The first 27 residues, 1–27 (MNKKKNTILIGLYFLVGIMLFPDRIYA), serve as a signal peptide directing secretion. 6 helical membrane-spanning segments follow: residues 35 to 55 (LPVKWAGIWWIAMLPFLALGI), 66 to 86 (GPGIKMLLALAGAFVFVLSSL), 103 to 123 (LGAILFGPWPMVVLGCIVLIF), 131 to 151 (GGLTTLGANVFSMAIVGPFVA), 166 to 186 (WLSVFTGSALGNLLTYITTAT), and 208 to 228 (VFATTQVPLAVTEGLVTVLIF).

It belongs to the CbiM family. In terms of assembly, forms an energy-coupling factor (ECF) transporter complex composed of an ATP-binding protein (A component, CbiO), a transmembrane protein (T component, CbiQ) and 2 possible substrate-capture proteins (S components, CbiM and CbiN) of unknown stoichimetry.

Its subcellular location is the cell membrane. It functions in the pathway cofactor biosynthesis; adenosylcobalamin biosynthesis. In terms of biological role, part of the energy-coupling factor (ECF) transporter complex CbiMNOQ involved in cobalt import. The chain is Cobalt transport protein CbiM from Acetohalobium arabaticum (strain ATCC 49924 / DSM 5501 / Z-7288).